We begin with the raw amino-acid sequence, 609 residues long: MRLLLIHSDYIEYEAQKKTKMAEADPVPKDGMTEALTVFTAVEAVDEEDIDDVVAQSVAEIEKTATQLAVKNLLIYPYAHLSSDLSSPEAAVAALSAIERRLNETGRYEVKRAPFGWYKKFKLSCKGHPLSELSKTIVPGAGAAVKEKKEVTHEFFVMTPDGERHETGEFLEGRFGALVKKEIGIAEPVGGEPIHVDLMRSKELVDYEPASDVGNLRWLPRGKIVRDLLADYVLHMVLEYGGSPVETPVMYDLGDKAIYEHADKFGERQYRFKSGNRNMMLRFAACFGMFSIMRDMHISPNTLPIKMYELSTYSFRHEQRGEVIGLKRLRAFTMPDMHSLCLDMEGALHCFEEQLRLGWKSGEDFETELVGVFRCTRGFYEKYENWVKSIVAESRVPMLIEILSDRVHYWIAKVDLAAIDGQGRPIENPTVQIDVESSTRFDIKYHLDGEVVHPPILHCSPTGSIERVICALLENTANQSVPQLPAWLAPTQVRLIPVAERHTSFADELCTRLNKAQIRTDLDDREESVGKKVREAGMDWVPYVIVIGDAEMETGKLTVTIRKLSEPRVPHKEQLDVEELITLVRTSTDGMPFRPLYTTRNLSKKPRYI.

Positions 1 to 145 (MRLLLIHSDY…TIVPGAGAAV (145 aa)) are editing domain. Residues 194-485 (IHVDLMRSKE…TANQSVPQLP (292 aa)) form a catalytic region. Zn(2+) is bound by residues cysteine 286, histidine 338, and histidine 458.

The protein belongs to the class-II aminoacyl-tRNA synthetase family. Homodimer. It depends on Zn(2+) as a cofactor.

Its subcellular location is the cytoplasm. The enzyme catalyses tRNA(Thr) + L-threonine + ATP = L-threonyl-tRNA(Thr) + AMP + diphosphate + H(+). Functionally, catalyzes the attachment of threonine to tRNA(Thr) in a two-step reaction: L-threonine is first activated by ATP to form Thr-AMP and then transferred to the acceptor end of tRNA(Thr). Also edits incorrectly charged L-seryl-tRNA(Thr). In Methanosphaerula palustris (strain ATCC BAA-1556 / DSM 19958 / E1-9c), this protein is Threonine--tRNA ligase.